The chain runs to 341 residues: L-threonine 3-dehydrogenase (341 aa).

Cysteine 38 is a Zn(2+) binding site. Residues threonine 40 and histidine 43 each act as charge relay system in the active site. Zn(2+) is bound by residues histidine 63, glutamate 64, cysteine 93, cysteine 96, cysteine 99, and cysteine 107. Residues isoleucine 175, aspartate 195, arginine 200, 262–264, and 286–287 contribute to the NAD(+) site; these read LGI and IY.

This sequence belongs to the zinc-containing alcohol dehydrogenase family. Homotetramer. Requires Zn(2+) as cofactor.

The protein localises to the cytoplasm. The catalysed reaction is L-threonine + NAD(+) = (2S)-2-amino-3-oxobutanoate + NADH + H(+). It functions in the pathway amino-acid degradation; L-threonine degradation via oxydo-reductase pathway; glycine from L-threonine: step 1/2. In terms of biological role, catalyzes the NAD(+)-dependent oxidation of L-threonine to 2-amino-3-ketobutyrate. This Edwardsiella ictaluri (strain 93-146) protein is L-threonine 3-dehydrogenase.